The chain runs to 203 residues: E3 ubiquitin-protein ligase RNF152 (203 aa).

An RING-type zinc finger spans residues 12 to 55; that stretch reads CQICFNYYSPRRRPKLLDCKHTCCSVCLQQMRTSQKDVRCPWCR. Positions 106–165 are necessary for interaction with RRAGA; it reads ISKERTLLPGDMGCRLLPGSQQKSLTVVTIPAEQQPLQGGAPPEAVEEEPDRRGVVKSST. The tract at residues 139–158 is disordered; it reads QQPLQGGAPPEAVEEEPDRR. Residues 167–187 form a helical membrane-spanning segment; the sequence is SGVCTVILVACVLVFLLGIVL.

The protein belongs to the RNF152 family. As to quaternary structure, interacts with RRAGA (inactive GDP-bound form); stimulated by amino acid starvation. Interacts with SEC16A. Post-translationally, ubiquitinated. Autoubiquitinated in vitro, leading to its degradation by the proteasome.

The protein localises to the lysosome membrane. The enzyme catalyses S-ubiquitinyl-[E2 ubiquitin-conjugating enzyme]-L-cysteine + [acceptor protein]-L-lysine = [E2 ubiquitin-conjugating enzyme]-L-cysteine + N(6)-ubiquitinyl-[acceptor protein]-L-lysine.. It participates in protein modification; protein ubiquitination. Its function is as follows. E3 ubiquitin-protein ligase that acts as a negative regulator of mTORC1 signaling by mediating ubiquitination of RagA/RRAGA and RHEB. Catalyzes 'Lys-63'-linked polyubiquitination of RagA/RRAGA in response to amino acid starvation, thereby regulating mTORC1 signaling. Also mediates monoubiquitination of RHEB, promoting its association with the TSC-TBC complex and subsequent inhibition. Also mediates 'Lys-48'-linked polyubiquitination of target proteins and their subsequent targeting to the proteasome for degradation. Induces apoptosis when overexpressed. This chain is E3 ubiquitin-protein ligase RNF152, found in Mus musculus (Mouse).